The primary structure comprises 107 residues: Anti-adapter protein IraM (107 aa).

It belongs to the IraM/RssC family.

Its subcellular location is the cytoplasm. Inhibits RpoS proteolysis by regulating RssB activity, thereby increasing the stability of the sigma stress factor RpoS during magnesium starvation. This chain is Anti-adapter protein IraM, found in Escherichia coli (strain 55989 / EAEC).